The chain runs to 411 residues: Replication factor C subunit 2 (411 aa).

Residues 1–36 (MADFFNLKARQQAAAQASSSKTPTSKQESNRLQPWV) form a disordered region. The span at 11–27 (QQAAAQASSSKTPTSKQ) shows a compositional bias: low complexity. ATP contacts are provided by residues V36, R40, 73–81 (GPPGTGKTS), N195, and R253.

The protein belongs to the activator 1 small subunits family. In terms of assembly, heteropentamer of subunits RFC1, RFC2, RFC3, RFC4 and RFC5 that forms a complex with PCNA in the presence of ATP.

It is found in the nucleus. Its function is as follows. The elongation of primed DNA templates by DNA polymerase delta and epsilon requires the action of the accessory proteins proliferating cell nuclear antigen (PCNA) and activator 1. Subunit 2 binds ATP and single-stranded DNA. This is Replication factor C subunit 2 (RFC2) from Phaeosphaeria nodorum (strain SN15 / ATCC MYA-4574 / FGSC 10173) (Glume blotch fungus).